The primary structure comprises 372 residues: Cyclin-dependent kinase 9 (372 aa).

Residues 19 to 315 (YEKLAKIGQG…SDDALNHDFF (297 aa)) form the Protein kinase domain. 25–33 (IGQGTFGEV) serves as a coordination point for ATP. At lysine 44 the chain carries N6-acetyllysine; by EP300/CBP, PCAF/KAT2B and GCN5/KAT2A. Residues lysine 48 and 104-106 (DFC) each bind ATP. Residue lysine 48 is modified to N6-acetyllysine; by PCAF/KAT2B and GCN5/KAT2A. The active-site Proton acceptor is the aspartate 149. The tract at residues 166–191 (ADFGLARAFSLAKNSQPNRYTNRVVT) is T-loop. An ATP-binding site is contributed by aspartate 167. The residue at position 175 (serine 175) is a Phosphoserine. Threonine 186 is modified (phosphothreonine; by CaMK1D). Residues 343 to 372 (RRKGSQITQQSTNQSRNPATTNQTEFERVF) are disordered. Serine 347 is modified (phosphoserine; by CDK9 and PKA). Residues 347-366 (SQITQQSTNQSRNPATTNQT) show a composition bias toward polar residues. The residue at position 350 (threonine 350) is a Phosphothreonine; by CDK9. Serine 353 carries the post-translational modification Phosphoserine; by CDK9. Threonine 354 bears the Phosphothreonine; by CDK9 mark. Serine 357 carries the post-translational modification Phosphoserine; by CDK9. Phosphothreonine; by CDK9 occurs at positions 362 and 363.

It belongs to the protein kinase superfamily. CMGC Ser/Thr protein kinase family. CDC2/CDKX subfamily. As to quaternary structure, component of the super elongation complex (SEC), at least composed of EAF1, EAF2, CDK9, MLLT3/AF9, AFF (AFF1 or AFF4), the P-TEFb complex and ELL (ELL, ELL2 or ELL3). Associates with CCNT1/cyclin-T1, CCNT2/cyclin-T2 (isoform A and isoform B) or CCNK/cyclin-K to form active P-TEFb. P-TEFb forms a complex with AFF4/AF5Q31 and is part of the super elongation complex (SEC). Component of a complex which is composed of at least 5 members: HTATSF1/Tat-SF1, P-TEFb complex, RNA pol II, SUPT5H, and NCL/nucleolin. Associates with UBR5 and forms a transcription regulatory complex composed of CDK9, RNAP II, UBR5 and TFIIS/TCEA1 that can stimulate target gene transcription (e.g. gamma fibrinogen/FGG) by recruiting their promoters. Component of the 7SK snRNP inactive complex which is composed of at least 8 members: P-TEFb (composed of CDK9 and CCNT1/cyclin-T1), HEXIM1, HEXIM2, LARP7, BCDIN3, SART3 proteins and 7SK and U6 snRNAs. This inactive 7SK snRNP complex can also interact with NCOR1 and HDAC3, probably to regulate CDK9 acetylation. Release of P-TEFb from P-TEFb/7SK snRNP complex requires both PP2B to transduce calcium Ca(2+) signaling in response to stimuli (e.g. UV or hexamethylene bisacetamide (HMBA)), and PPP1CA to dephosphorylate Thr-186. This released P-TEFb remains inactive in the pre-initiation complex with BRD4 until new Thr-186 phosphorylation occurs after the synthesis of a short RNA. Interacts with BRD4; to target chromatin binding. Interacts with JMJD6. Interacts with activated nuclear STAT3 and RELA/p65. Binds to AR and MYOD1. Forms a complex composed of CDK9, CCNT1/cyclin-T1, EP300 and GATA4 that stimulates hypertrophy in cardiomyocytes. The large PER complex involved in the repression of transcriptional termination is composed of at least PER2, CDK9, DDX5, DHX9, NCBP1 and POLR2A. Interacts with HSF1. Interacts with TBX21. Interacts with WDR43. Interacts with ZMYND8; the association appears to occur between homodimeric ZMYND8 and the activated form of the P-TEFb complex. Autophosphorylation at Thr-186, Ser-347, Thr-350, Ser-353, Thr-354 and Ser-357 triggers kinase activity by promoting cyclin and substrate binding upon conformational changes. Thr-186 phosphorylation requires the calcium Ca(2+) signaling pathway, including CaMK1D and calmodulin. This inhibition is relieved by Thr-29 dephosphorylation. Phosphorylation at Ser-175 inhibits kinase activity. Can be phosphorylated on either Thr-362 or Thr-363 but not on both simultaneously. In terms of processing, dephosphorylation of Thr-186 by PPM1A and PPM1B blocks CDK9 activity and may lead to CDK9 proteasomal degradation. However, PPP1CA-mediated Thr-186 dephosphorylation is required to release P-TEFb from its inactive P-TEFb/7SK snRNP complex. Dephosphorylated at Ser-347 by the PNUTS-PP1 complex during RNA polymerase II transcription pause-release. Dephosphorylation of C-terminus Thr and Ser residues by protein phosphatase-1 (PP1) triggers CDK9 activity. Post-translationally, N6-acetylation of Lys-44 promotes kinase activity, whereas acetylation of both Lys-44 and Lys-48 mediated by PCAF/KAT2B and GCN5/KAT2A reduces kinase activity. The acetylated form associates with PML bodies in the nuclear matrix and with the transcriptionally silent HIV-1 genome; deacetylated upon transcription stimulation. Deacetylated by SIRT7, promoting the kinase activity and subsequent 'Ser-2' phosphorylation of the C-terminal domain (CTD) of RNA polymerase II. Polyubiquitinated and thus activated by UBR5. This ubiquitination is promoted by TFIIS/TCEA1 and favors 'Ser-2' phosphorylation of RPB1/POLR2A CTD.

It is found in the nucleus. The protein resides in the cytoplasm. Its subcellular location is the PML body. It carries out the reaction L-seryl-[protein] + ATP = O-phospho-L-seryl-[protein] + ADP + H(+). The enzyme catalyses L-threonyl-[protein] + ATP = O-phospho-L-threonyl-[protein] + ADP + H(+). It catalyses the reaction [DNA-directed RNA polymerase] + ATP = phospho-[DNA-directed RNA polymerase] + ADP + H(+). Its activity is regulated as follows. Activation by Thr-186 phosphorylation is calcium Ca(2+) signaling pathway-dependent; actively inactivated by dephosphorylation mediated by PPP1CA, PPM1A and PPM1B. Reversibly repressed by acetylation at Lys-44 and Lys-48. Protein kinase involved in the regulation of transcription. Member of the cyclin-dependent kinase pair (CDK9/cyclin-T) complex, also called positive transcription elongation factor b (P-TEFb), which facilitates the transition from abortive to productive elongation by phosphorylating the CTD (C-terminal domain) of the large subunit of RNA polymerase II (RNAP II) POLR2A, SUPT5H and RDBP. This complex is inactive when in the 7SK snRNP complex form. Phosphorylates EP300, MYOD1, RPB1/POLR2A and AR and the negative elongation factors DSIF and NELFE. Regulates cytokine inducible transcription networks by facilitating promoter recognition of target transcription factors (e.g. TNF-inducible RELA/p65 activation and IL-6-inducible STAT3 signaling). Promotes RNA synthesis in genetic programs for cell growth, differentiation and viral pathogenesis. P-TEFb is also involved in cotranscriptional histone modification, mRNA processing and mRNA export. Modulates a complex network of chromatin modifications including histone H2B monoubiquitination (H2Bub1), H3 lysine 4 trimethylation (H3K4me3) and H3K36me3; integrates phosphorylation during transcription with chromatin modifications to control co-transcriptional histone mRNA processing. The CDK9/cyclin-K complex has also a kinase activity towards CTD of RNAP II and can substitute for CDK9/cyclin-T P-TEFb in vitro. Replication stress response protein; the CDK9/cyclin-K complex is required for genome integrity maintenance, by promoting cell cycle recovery from replication arrest and limiting single-stranded DNA amount in response to replication stress, thus reducing the breakdown of stalled replication forks and avoiding DNA damage. In addition, probable function in DNA repair of isoform 2 via interaction with KU70/XRCC6. Promotes cardiac myocyte enlargement. RPB1/POLR2A phosphorylation on 'Ser-2' in CTD activates transcription. AR phosphorylation modulates AR transcription factor promoter selectivity and cell growth. DSIF and NELF phosphorylation promotes transcription by inhibiting their negative effect. The phosphorylation of MYOD1 enhances its transcriptional activity and thus promotes muscle differentiation. Catalyzes phosphorylation of KAT5, promoting KAT5 recruitment to chromatin and histone acetyltransferase activity. This chain is Cyclin-dependent kinase 9 (CDK9), found in Bos taurus (Bovine).